The primary structure comprises 314 residues: Protoheme IX farnesyltransferase (314 aa).

Transmembrane regions (helical) follow at residues 58–78 (LWLV…ASVF), 107–127 (AALV…YVWV), 130–150 (LSAA…TMLL), 173–193 (WTAV…VVFF), 227–247 (VGRQ…LLWP), 248–268 (VAGT…VFLL), and 294–314 (SSNL…LLAG).

The protein belongs to the UbiA prenyltransferase family. Protoheme IX farnesyltransferase subfamily.

It is found in the cell membrane. The enzyme catalyses heme b + (2E,6E)-farnesyl diphosphate + H2O = Fe(II)-heme o + diphosphate. Its pathway is porphyrin-containing compound metabolism; heme O biosynthesis; heme O from protoheme: step 1/1. Functionally, converts heme B (protoheme IX) to heme O by substitution of the vinyl group on carbon 2 of heme B porphyrin ring with a hydroxyethyl farnesyl side group. In Nocardioides sp. (strain ATCC BAA-499 / JS614), this protein is Protoheme IX farnesyltransferase.